A 188-amino-acid chain; its full sequence is Probable nicotinate-nucleotide adenylyltransferase (188 aa).

The protein belongs to the NadD family.

It carries out the reaction nicotinate beta-D-ribonucleotide + ATP + H(+) = deamido-NAD(+) + diphosphate. The protein operates within cofactor biosynthesis; NAD(+) biosynthesis; deamido-NAD(+) from nicotinate D-ribonucleotide: step 1/1. Its function is as follows. Catalyzes the reversible adenylation of nicotinate mononucleotide (NaMN) to nicotinic acid adenine dinucleotide (NaAD). This Listeria monocytogenes serotype 4b (strain F2365) protein is Probable nicotinate-nucleotide adenylyltransferase.